We begin with the raw amino-acid sequence, 486 residues long: mRNA cap guanine-N(7) methyltransferase (486 aa).

Residues 1–92 (MAGGADLDEP…ADRKAARERA (92 aa)) form a disordered region. Basic and acidic residues-rich tracts occupy residues 9-28 (EPPR…DSTH), 35-54 (VPRD…EPAR), and 82-92 (EADRKAARERA). One can recognise an mRNA cap 0 methyltransferase domain in the interval 135-486 (SRIKGLRSFN…FYVGFCFYKV (352 aa)). Residue 144–145 (NN) coordinates mRNA. Residues Lys148, Gly177, Asp201, Asp247, 281–283 (MFC), and Tyr286 each bind S-adenosyl-L-methionine. The span at 333–351 (VEMKKKQAEAGDGSKKDDG) shows a compositional bias: basic and acidic residues. The tract at residues 333 to 365 (VEMKKKQAEAGDGSKKDDGGDAEEGELDEPEVE) is disordered. Positions 352-363 (GDAEEGELDEPE) are enriched in acidic residues.

Belongs to the class I-like SAM-binding methyltransferase superfamily. mRNA cap 0 methyltransferase family.

The protein resides in the nucleus. It carries out the reaction a 5'-end (5'-triphosphoguanosine)-ribonucleoside in mRNA + S-adenosyl-L-methionine = a 5'-end (N(7)-methyl 5'-triphosphoguanosine)-ribonucleoside in mRNA + S-adenosyl-L-homocysteine. In terms of biological role, responsible for methylating the 5'-cap structure of mRNAs. The chain is mRNA cap guanine-N(7) methyltransferase (ABD1) from Pyricularia oryzae (strain 70-15 / ATCC MYA-4617 / FGSC 8958) (Rice blast fungus).